The sequence spans 622 residues: Polypeptide N-acetylgalactosaminyltransferase 6 (622 aa).

At 1–8 (MRLLRRRH) the chain is on the cytoplasmic side. Residues 9 to 28 (MSLRLAMLGSVFMLFLFIRQ) traverse the membrane as a helical; Signal-anchor for type II membrane protein segment. Residues 29-622 (KDVSNQEQAM…RDPYQLWLFV (594 aa)) lie on the Lumenal side of the membrane. A glycan (N-linked (GlcNAc...) asparagine) is linked at Asn86. The interval 176–285 (LPTTSVIIVF…HGWLEPLLAR (110 aa)) is catalytic subdomain A. Mn(2+) is bound by residues Asp269, His271, and His407. Residues 348–410 (PIKSPTFAGG…PCSVVGHVFR (63 aa)) are catalytic subdomain B. Asn476 carries N-linked (GlcNAc...) asparagine glycosylation. One can recognise a Ricin B-type lectin domain in the interval 506–622 (TNQCLDVGEN…RDPYQLWLFV (117 aa)). Cys509 and Cys527 form a disulfide bridge. Asp511, Glu514, His528, and Asn533 together coordinate UDP-N-acetyl-alpha-D-galactosamine. Intrachain disulfides connect Cys553-Cys566 and Cys597-Cys610.

The protein belongs to the glycosyltransferase 2 family. GalNAc-T subfamily. It depends on Mn(2+) as a cofactor.

The protein resides in the golgi apparatus membrane. The enzyme catalyses L-seryl-[protein] + UDP-N-acetyl-alpha-D-galactosamine = a 3-O-[N-acetyl-alpha-D-galactosaminyl]-L-seryl-[protein] + UDP + H(+). It catalyses the reaction L-threonyl-[protein] + UDP-N-acetyl-alpha-D-galactosamine = a 3-O-[N-acetyl-alpha-D-galactosaminyl]-L-threonyl-[protein] + UDP + H(+). The protein operates within protein modification; protein glycosylation. Functionally, catalyzes the initial reaction in O-linked oligosaccharide biosynthesis, the transfer of an N-acetyl-D-galactosamine residue to a serine or threonine residue on the protein receptor. May participate in synthesis of oncofetal fibronectin. Has activity toward Muc1a, Muc2, EA2 and fibronectin peptides. This Mus musculus (Mouse) protein is Polypeptide N-acetylgalactosaminyltransferase 6 (Galnt6).